A 170-amino-acid chain; its full sequence is Small ribosomal subunit protein bS18c (170 aa).

Residues 1-61 form a disordered region; sequence MYTSKQPFLK…RRPRIGPGDR (61 aa). Residues 13–26 show a composition bias toward polar residues; that stretch reads QPFSKSKQTFNKSK. Positions 27–55 are enriched in basic residues; sequence QPFRKSKQTFRKFKQPFRKSKQPFRRRPR.

Belongs to the bacterial ribosomal protein bS18 family. Part of the 30S ribosomal subunit.

Its subcellular location is the plastid. It localises to the chloroplast. This chain is Small ribosomal subunit protein bS18c, found in Hordeum vulgare (Barley).